The primary structure comprises 237 residues: Probable transcriptional regulatory protein Exig_1693 (237 aa).

The protein belongs to the TACO1 family. YeeN subfamily.

Its subcellular location is the cytoplasm. This is Probable transcriptional regulatory protein Exig_1693 from Exiguobacterium sibiricum (strain DSM 17290 / CCUG 55495 / CIP 109462 / JCM 13490 / 255-15).